The following is a 272-amino-acid chain: Putative phosphoenolpyruvate synthase regulatory protein (272 aa).

152-159 provides a ligand contact to ADP; the sequence is GVSRSGKT.

Belongs to the pyruvate, phosphate/water dikinase regulatory protein family. PSRP subfamily.

The catalysed reaction is [pyruvate, water dikinase] + ADP = [pyruvate, water dikinase]-phosphate + AMP + H(+). It carries out the reaction [pyruvate, water dikinase]-phosphate + phosphate + H(+) = [pyruvate, water dikinase] + diphosphate. Functionally, bifunctional serine/threonine kinase and phosphorylase involved in the regulation of the phosphoenolpyruvate synthase (PEPS) by catalyzing its phosphorylation/dephosphorylation. The polypeptide is Putative phosphoenolpyruvate synthase regulatory protein (Methylibium petroleiphilum (strain ATCC BAA-1232 / LMG 22953 / PM1)).